The primary structure comprises 58 residues: Small ribosomal subunit protein bS21 (58 aa).

A disordered region spans residues 36–58 (EHYEKPSVKRKKKSEAARRRKYR). Basic residues predominate over residues 43 to 58 (VKRKKKSEAARRRKYR).

This sequence belongs to the bacterial ribosomal protein bS21 family.

This is Small ribosomal subunit protein bS21 from Symbiobacterium thermophilum (strain DSM 24528 / JCM 14929 / IAM 14863 / T).